The following is a 114-amino-acid chain: DNA-binding protein rrnAC3180 (114 aa).

Residues 1–11 (MSGDPSEEELE) show a composition bias toward acidic residues. The segment at 1–45 (MSGDPSEEELEELRKKKMEQLKEQQGGEGEGQEAAQQQAEAQKQA) is disordered. Residues 12-22 (ELRKKKMEQLK) are compositionally biased toward basic and acidic residues. The span at 32–45 (QEAAQQQAEAQKQA) shows a compositional bias: low complexity.

It belongs to the PDCD5 family.

This chain is DNA-binding protein rrnAC3180, found in Haloarcula marismortui (strain ATCC 43049 / DSM 3752 / JCM 8966 / VKM B-1809) (Halobacterium marismortui).